A 250-amino-acid chain; its full sequence is Adenosylcobinamide-GDP ribazoletransferase (250 aa).

Transmembrane regions (helical) follow at residues 32–52 (KGII…MVAY), 59–79 (LAHS…TGGL), 113–133 (GVLA…GLGE), 136–156 (IYWG…YGCY), 185–205 (LTFI…LLPI), and 230–250 (CELT…AGLF).

Belongs to the CobS family. Mg(2+) serves as cofactor.

The protein localises to the cell membrane. The catalysed reaction is alpha-ribazole + adenosylcob(III)inamide-GDP = adenosylcob(III)alamin + GMP + H(+). It carries out the reaction alpha-ribazole 5'-phosphate + adenosylcob(III)inamide-GDP = adenosylcob(III)alamin 5'-phosphate + GMP + H(+). Its pathway is cofactor biosynthesis; adenosylcobalamin biosynthesis; adenosylcobalamin from cob(II)yrinate a,c-diamide: step 7/7. Joins adenosylcobinamide-GDP and alpha-ribazole to generate adenosylcobalamin (Ado-cobalamin). Also synthesizes adenosylcobalamin 5'-phosphate from adenosylcobinamide-GDP and alpha-ribazole 5'-phosphate. This is Adenosylcobinamide-GDP ribazoletransferase from Alkaliphilus metalliredigens (strain QYMF).